Reading from the N-terminus, the 396-residue chain is Tryptophan synthase beta chain (396 aa).

N6-(pyridoxal phosphate)lysine is present on lysine 88.

Belongs to the TrpB family. As to quaternary structure, tetramer of two alpha and two beta chains. Pyridoxal 5'-phosphate serves as cofactor.

The enzyme catalyses (1S,2R)-1-C-(indol-3-yl)glycerol 3-phosphate + L-serine = D-glyceraldehyde 3-phosphate + L-tryptophan + H2O. It functions in the pathway amino-acid biosynthesis; L-tryptophan biosynthesis; L-tryptophan from chorismate: step 5/5. Its function is as follows. The beta subunit is responsible for the synthesis of L-tryptophan from indole and L-serine. This chain is Tryptophan synthase beta chain, found in Actinobacillus pleuropneumoniae serotype 7 (strain AP76).